A 152-amino-acid polypeptide reads, in one-letter code: Probable methionine-R-sulfoxide reductase B (152 aa).

In terms of domain architecture, MsrB spans 27–151; sequence QTEWKSVLPN…NSVCMAFEKK (125 aa). Cysteine 66, cysteine 69, cysteine 116, and cysteine 119 together coordinate Zn(2+). The active-site Nucleophile is cysteine 140.

The protein belongs to the MsrB Met sulfoxide reductase family. Zn(2+) is required as a cofactor.

The enzyme catalyses L-methionyl-[protein] + [thioredoxin]-disulfide + H2O = L-methionyl-(R)-S-oxide-[protein] + [thioredoxin]-dithiol. In terms of biological role, methionine-sulfoxide reductase that specifically reduces methionine (R)-sulfoxide back to methionine. While in many cases, methionine oxidation is the result of random oxidation following oxidative stress, methionine oxidation is also a post-translational modification that takes place on specific residue. This chain is Probable methionine-R-sulfoxide reductase B, found in Caenorhabditis elegans.